The following is a 406-amino-acid chain: Formate-dependent phosphoribosylglycinamide formyltransferase (406 aa).

N(1)-(5-phospho-beta-D-ribosyl)glycinamide is bound by residues 27–28 (EL) and glutamate 87. ATP is bound by residues arginine 120, lysine 162, 167-172 (SSGKGQ), 202-205 (EGFI), and glutamate 210. One can recognise an ATP-grasp domain in the interval 125 to 320 (RLAAETLGLP…EFELHARALL (196 aa)). The Mg(2+) site is built by glutamate 279 and glutamate 291. N(1)-(5-phospho-beta-D-ribosyl)glycinamide-binding positions include aspartate 298, lysine 367, and 374–375 (RR).

It belongs to the PurK/PurT family. Homodimer.

The enzyme catalyses N(1)-(5-phospho-beta-D-ribosyl)glycinamide + formate + ATP = N(2)-formyl-N(1)-(5-phospho-beta-D-ribosyl)glycinamide + ADP + phosphate + H(+). It participates in purine metabolism; IMP biosynthesis via de novo pathway; N(2)-formyl-N(1)-(5-phospho-D-ribosyl)glycinamide from N(1)-(5-phospho-D-ribosyl)glycinamide (formate route): step 1/1. Functionally, involved in the de novo purine biosynthesis. Catalyzes the transfer of formate to 5-phospho-ribosyl-glycinamide (GAR), producing 5-phospho-ribosyl-N-formylglycinamide (FGAR). Formate is provided by PurU via hydrolysis of 10-formyl-tetrahydrofolate. This Bordetella parapertussis (strain 12822 / ATCC BAA-587 / NCTC 13253) protein is Formate-dependent phosphoribosylglycinamide formyltransferase.